Reading from the N-terminus, the 337-residue chain is MANRGARHARTEDTENTINYVQCDGLAVMKMVKHCHEESSNMDLAQGALLGLVVDKCLEITNCFPFPKSGDETMDDETYQLTVMRHLRRVNVDHLHVGWYQSSDVGNSLSLALLESQYHYQTSIEESVVVVYDTQKSSRGFLCLKAYRLTPQAIQMYKDSDFTPEAFRTLKVGYESLFAEIPIVIKNSPLTNIMMSELNELLPEDKGHNFLDLGTASVLENHMRSLIERVDELYQESVRYNKYQQVVFKQDTEKHRALAKLAAENAVRTSKGEPTVPEEEVIKQFRPMPVPARLTATITSGQINTHAQHIAQFCSQSLAKLFITEALQNAKETKEIK.

An MPN domain is found at 21 to 153; it reads VQCDGLAVMK…LKAYRLTPQA (133 aa).

It belongs to the eIF-3 subunit H family. In terms of assembly, component of the eukaryotic translation initiation factor 3 (eIF-3) complex. The eIF-3 complex interacts with pix. Interacts with mxt.

Its subcellular location is the cytoplasm. In terms of biological role, component of the eukaryotic translation initiation factor 3 (eIF-3) complex, which is involved in protein synthesis of a specialized repertoire of mRNAs and, together with other initiation factors, stimulates binding of mRNA and methionyl-tRNAi to the 40S ribosome. The eIF-3 complex specifically targets and initiates translation of a subset of mRNAs involved in cell proliferation. The chain is Eukaryotic translation initiation factor 3 subunit H from Drosophila grimshawi (Hawaiian fruit fly).